We begin with the raw amino-acid sequence, 267 residues long: Staphylococcal secretory antigen ssaA2 (267 aa).

The first 27 residues, 1–27, serve as a signal peptide directing secretion; sequence MKKIATATIATAGFATIAIASGNQAHA. Tandem repeats lie at residues 83-85, 86-88, 89-91, 95-97, 101-103, 104-106, and 113-115. A 7 X 3 AA repeats of Y-[NS]-N region spans residues 83-115; that stretch reads YNNYNNYNNGYSYNNYSRYNNYSNNNQSYNYNN. Positions 146–267 constitute a Peptidase C51 domain; the sequence is MAPSSNGRSI…SQAAGYNFIH (122 aa).

Its subcellular location is the secreted. Its function is as follows. Not known; immunogenic protein. This is Staphylococcal secretory antigen ssaA2 (ssaA2) from Staphylococcus aureus (strain NCTC 8325 / PS 47).